A 381-amino-acid chain; its full sequence is Creatine kinase B-type (381 aa).

The 88-residue stretch at 11-98 (KMKYSVDDEY…FDPVIEDRHG (88 aa)) folds into the Phosphagen kinase N-terminal domain. Val-72 is a creatine binding site. The region spanning 125-367 (YVLSSRVRTG…KLLIEMEKRL (243 aa)) is the Phosphagen kinase C-terminal domain. Residues 128–132 (SSRVR), Arg-130, Arg-132, and His-191 contribute to the ATP site. Residue Glu-232 coordinates creatine. Position 236 (Arg-236) interacts with ATP. Thr-282 is modified (phosphothreonine; by autocatalysis). Ser-285 lines the creatine pocket. Ser-285 is subject to Phosphoserine; by autocatalysis. At Thr-289 the chain carries Phosphothreonine; by autocatalysis. ATP-binding positions include Arg-292, Arg-320, 320-325 (RGTGGV), and Asp-335.

Belongs to the ATP:guanido phosphotransferase family. As to quaternary structure, dimer of identical or non-identical chains, which can be either B (brain type) or M (muscle type). With MM being the major form in skeletal muscle and myocardium, MB existing in myocardium, and BB existing in many tissues, especially brain. Ba-CK and Bb-CK are phosphorylated. In terms of processing, the N-terminus of BA-CK is blocked. Expressed in almost all tissues and found enriched in various region of the brain, retina, heart, gizzard, gut and sperm.

It localises to the cytoplasm. The protein localises to the cytosol. Its subcellular location is the mitochondrion. The protein resides in the cell membrane. The enzyme catalyses creatine + ATP = N-phosphocreatine + ADP + H(+). In terms of biological role, reversibly catalyzes the transfer of phosphate between ATP and various phosphogens (e.g. creatine phosphate). Creatine kinase isoenzymes play a central role in energy transduction in tissues with large, fluctuating energy demands, such as skeletal muscle, heart, brain and spermatozoa. The polypeptide is Creatine kinase B-type (Gallus gallus (Chicken)).